Here is a 506-residue protein sequence, read N- to C-terminus: Ent-kaurenoic acid oxidase (506 aa).

A helical transmembrane segment spans residues 11 to 31; it reads AWAAGDLWVLAAAVVAGVVLV. A heme-binding site is contributed by cysteine 451.

Belongs to the cytochrome P450 family. Requires heme as cofactor. Expressed in roots and panicles. Expressed at low levels in vegetative shoot apices, leaf sheaths, leaf blades and stems.

The protein localises to the endoplasmic reticulum membrane. It catalyses the reaction ent-kaur-16-en-19-oate + 3 reduced [NADPH--hemoprotein reductase] + 3 O2 = gibberellin A12 + 3 oxidized [NADPH--hemoprotein reductase] + 4 H2O + 4 H(+). It carries out the reaction ent-kaur-16-en-19-oate + reduced [NADPH--hemoprotein reductase] + O2 = ent-7alpha-hydroxykaur-16-en-19-oate + oxidized [NADPH--hemoprotein reductase] + H2O + H(+). The enzyme catalyses ent-7alpha-hydroxykaur-16-en-19-oate + reduced [NADPH--hemoprotein reductase] + O2 = gibberellin A12 aldehyde + oxidized [NADPH--hemoprotein reductase] + 2 H2O + H(+). The catalysed reaction is gibberellin A12 aldehyde + reduced [NADPH--hemoprotein reductase] + O2 = gibberellin A12 + oxidized [NADPH--hemoprotein reductase] + H2O + 2 H(+). It functions in the pathway plant hormone biosynthesis; gibberellin biosynthesis. Its function is as follows. Involved in gibberellin (GA) biosynthesis. Catalyzes three successive oxidations of ent-kaurenoic acid giving gibberellin 12 (GA12), a key step in GAs biosynthesis. GAs, which are involved many processes, including stem elongation, play a central role in plant development. Required for pollen germination and elongation. This is Ent-kaurenoic acid oxidase from Oryza sativa subsp. japonica (Rice).